The following is a 789-amino-acid chain: DNA topoisomerase 4 subunit A (789 aa).

Residues 34 to 499 form the Topo IIA-type catalytic domain; the sequence is LPDLRDGLKP…EKQKVQDSDF (466 aa). Tyr-122 (O-(5'-phospho-DNA)-tyrosine intermediate) is an active-site residue.

It belongs to the type II topoisomerase GyrA/ParC subunit family. ParC type 2 subfamily. In terms of assembly, heterotetramer composed of ParC and ParE.

Its subcellular location is the cell membrane. It catalyses the reaction ATP-dependent breakage, passage and rejoining of double-stranded DNA.. Its function is as follows. Topoisomerase IV is essential for chromosome segregation. It relaxes supercoiled DNA. Performs the decatenation events required during the replication of a circular DNA molecule. In Mycoplasma pneumoniae (strain ATCC 29342 / M129 / Subtype 1) (Mycoplasmoides pneumoniae), this protein is DNA topoisomerase 4 subunit A.